Consider the following 327-residue polypeptide: Pumilio homolog 18 (327 aa).

The PUM-HD domain maps to 1–324 (MAVADNPFSM…NIANILDSFR (324 aa)). Pumilio repeat units lie at residues 79–114 (SDSDYFMSIVTTKFGSRRVQKLLGKSDDVDAFFCAA), 115–149 (ILRRFLHITTDKYASYVTIRAMVVFDKVMKKALYE), 150–185 (RILYHALDLACDQHGCIALNDIITDADDPYYRDQLL), 186–222 (ELVASNALRLSNDASGNFVVQHVLTLYDSRCIHNIAV), 223–260 (NLYGQCIELSFKKYGSYIVEKLLEVEESMVVVVVELLG), and 261–295 (CDGDRLMRLARNEFGNFVVVKALRFTKMSRMDLFW).

Its subcellular location is the cytoplasm. Sequence-specific RNA-binding protein that regulates translation and mRNA stability by binding the 3'-UTR of target mRNAs. This is Pumilio homolog 18 (APUM18) from Arabidopsis thaliana (Mouse-ear cress).